Reading from the N-terminus, the 294-residue chain is Probable 2-(5''-triphosphoribosyl)-3'-dephosphocoenzyme-A synthase (294 aa).

Belongs to the CitG/MdcB family.

It catalyses the reaction 3'-dephospho-CoA + ATP = 2'-(5''-triphospho-alpha-D-ribosyl)-3'-dephospho-CoA + adenine. This chain is Probable 2-(5''-triphosphoribosyl)-3'-dephosphocoenzyme-A synthase, found in Streptococcus equi subsp. zooepidemicus (strain MGCS10565).